The following is a 650-amino-acid chain: Chaperone protein DnaK (650 aa).

Threonine 200 bears the Phosphothreonine; by autocatalysis mark. Residues 613 to 634 (QAGAAGAAGAAAAEGAAQGGAQ) show a composition bias toward low complexity. Positions 613 to 637 (QAGAAGAAGAAAAEGAAQGGAQTAD) are disordered.

This sequence belongs to the heat shock protein 70 family.

In terms of biological role, acts as a chaperone. This is Chaperone protein DnaK from Burkholderia thailandensis (strain ATCC 700388 / DSM 13276 / CCUG 48851 / CIP 106301 / E264).